A 310-amino-acid polypeptide reads, in one-letter code: Olfactory receptor 7A42 (310 aa).

Residues 1–25 (MESGNSTRRIPSFFLLGFSENPHLQ) are Extracellular-facing. Asn5 is a glycosylation site (N-linked (GlcNAc...) asparagine). The chain crosses the membrane as a helical span at residues 26 to 46 (FLIFVLFLSMYLVTVLGNLLI). Residues 47–67 (IMVIITQSPLHTPMYFFLANL) are Cytoplasmic-facing. A helical transmembrane segment spans residues 68 to 88 (SFVDICFTSTTVPKMLVNIQT). The Extracellular segment spans residues 89–100 (QSKAITYADCIS). Cys98 and Cys190 are disulfide-bonded. The chain crosses the membrane as a helical span at residues 101–121 (QMSVFLVFAELDNFLLAVMAY). Topologically, residues 122–135 (DRYVAICHPLYYTF) are cytoplasmic. A helical membrane pass occupies residues 136–156 (IVNQHLCILMVLLSWVVSILH). Over 157–202 (AFLQSSIVLQLTFCGDVKIPHFFCELNQLSQLTCLDSLSSHLIMNL) the chain is Extracellular. Residues 203-223 (VPVLLAVISFSSILYSYFKIV) form a helical membrane-spanning segment. Over 224–240 (SSICSISSVQGKYTAFS) the chain is Cytoplasmic. Residues 241 to 261 (TCVSHLSIVFLFYSTGLGVYV) form a helical membrane-spanning segment. The Extracellular portion of the chain corresponds to 262 to 272 (SSAVVQSSHSA). The chain crosses the membrane as a helical span at residues 273 to 293 (ARASVMYTVVTPMLNPFIYSL). Over 294–310 (RNKDVKKALERLLEGKL) the chain is Cytoplasmic.

It belongs to the G-protein coupled receptor 1 family.

It is found in the cell membrane. Odorant receptor. This chain is Olfactory receptor 7A42, found in Mus musculus (Mouse).